A 467-amino-acid chain; its full sequence is Argininosuccinate lyase (467 aa).

Belongs to the lyase 1 family. Argininosuccinate lyase subfamily.

Its subcellular location is the cytoplasm. It carries out the reaction 2-(N(omega)-L-arginino)succinate = fumarate + L-arginine. It participates in amino-acid biosynthesis; L-arginine biosynthesis; L-arginine from L-ornithine and carbamoyl phosphate: step 3/3. The protein is Argininosuccinate lyase of Thioalkalivibrio sulfidiphilus (strain HL-EbGR7).